Reading from the N-terminus, the 129-residue chain is L-ectoine synthase (129 aa).

This sequence belongs to the ectoine synthase family.

The enzyme catalyses (2S)-4-acetamido-2-aminobutanoate = L-ectoine + H2O. Its pathway is amine and polyamine biosynthesis; ectoine biosynthesis; L-ectoine from L-aspartate 4-semialdehyde: step 3/3. Catalyzes the circularization of gamma-N-acetyl-alpha,gamma-diaminobutyric acid (ADABA) to ectoine (1,4,5,6-tetrahydro-2-methyl-4-pyrimidine carboxylic acid), which is an excellent osmoprotectant. The protein is L-ectoine synthase of Halalkalibacterium halodurans (strain ATCC BAA-125 / DSM 18197 / FERM 7344 / JCM 9153 / C-125) (Bacillus halodurans).